The primary structure comprises 406 residues: Arginine deiminase (406 aa).

Cys396 (amidino-cysteine intermediate) is an active-site residue.

The protein belongs to the arginine deiminase family.

The protein resides in the cytoplasm. The catalysed reaction is L-arginine + H2O = L-citrulline + NH4(+). The protein operates within amino-acid degradation; L-arginine degradation via ADI pathway; carbamoyl phosphate from L-arginine: step 1/2. The polypeptide is Arginine deiminase (Vibrio vulnificus (strain CMCP6)).